A 168-amino-acid polypeptide reads, in one-letter code: Alpha-N-acetylgalactosamine-specific lectin (168 aa).

A signal peptide spans 1–18 (MAFFRALCFVLLVGFAAA). Residues 38 to 163 (YNGNCYRYFG…CSRAFAYVCK (126 aa)) enclose the C-type lectin domain. Cystine bridges form between Cys-59/Cys-162 and Cys-136/Cys-154.

Monomer, homodimer and homooligomer.

Functionally, alpha-N-acetylgalactosamine-specific lectin. The oligomeric form has Ca(2+)-dependent hemagglutination activity towards sheep erythrocytes. Its hemagglutination activity is inhibited by various monosaccharides, oligosaccharides and glycopeptides, including inhibition by GalNAc, blood group A trisaccharide, Tn antigen, mucin and asialomucin. The protein is Alpha-N-acetylgalactosamine-specific lectin of Patiria pectinifera (Starfish).